Here is a 364-residue protein sequence, read N- to C-terminus: DNA-(apurinic or apyrimidinic site) endonuclease (364 aa).

Composition is skewed to basic and acidic residues over residues 1–12 (MKRFFKPIEKEN) and 23–39 (PEKRDGDGDGVEEEKNQ). Residues 1 to 42 (MKRFFKPIEKENSPAAKKPCLSPEKRDGDGDGVEEEKNQNEP) form a disordered region. Residue E80 participates in Mg(2+) binding. Y182 is a catalytic residue. Residues D222, N224, and D342 each coordinate Mg(2+). Residue D222 is the Proton donor/acceptor of the active site.

The protein belongs to the DNA repair enzymes AP/exoA family. As to quaternary structure, interacts with ROS1. ROS1 is required for APE1L to stably associate with the DNA substrate. It depends on Mg(2+) as a cofactor. In terms of tissue distribution, expressed in leaves, flower buds and developing siliques. Not detected in roots.

It localises to the nucleus. The protein resides in the nucleolus. In terms of biological role, apurinic/apyrimidinic (AP) endonuclease involved in active DNA demethylation and gene imprinting. According to a report, also displays an in vitro 3'-phosphatase activity. According to another report, has no in vitro 3'-phosphatase activity. Catalyzes the conversion of the 3'-blocking groups 3'-phosphor-alpha,beta-unsaturated aldehyde (3'-PUA) generated by ROS1 to 3'-OH. Has a strong non-specific affinity to DNA. Redundant with APE2 and at least one functional allele is required for seed viability. The chain is DNA-(apurinic or apyrimidinic site) endonuclease from Arabidopsis thaliana (Mouse-ear cress).